Here is an 87-residue protein sequence, read N- to C-terminus: Small ribosomal subunit protein uS15c (87 aa).

It belongs to the universal ribosomal protein uS15 family. As to quaternary structure, part of the 30S ribosomal subunit.

The protein resides in the plastid. The protein localises to the chloroplast. This chain is Small ribosomal subunit protein uS15c (rps15), found in Solanum bulbocastanum (Wild potato).